The primary structure comprises 39 residues: Cytochrome b559 subunit beta (39 aa).

A helical membrane pass occupies residues 14-30; sequence WLAVHGLAIPTVSFLGS. Residue H18 coordinates heme.

Belongs to the PsbE/PsbF family. In terms of assembly, heterodimer of an alpha subunit and a beta subunit. PSII is composed of 1 copy each of membrane proteins PsbA, PsbB, PsbC, PsbD, PsbE, PsbF, PsbH, PsbI, PsbJ, PsbK, PsbL, PsbM, PsbT, PsbX, PsbY, PsbZ, Psb30/Ycf12, at least 3 peripheral proteins of the oxygen-evolving complex and a large number of cofactors. It forms dimeric complexes. Requires heme b as cofactor.

Its subcellular location is the plastid. The protein localises to the chloroplast thylakoid membrane. This b-type cytochrome is tightly associated with the reaction center of photosystem II (PSII). PSII is a light-driven water:plastoquinone oxidoreductase that uses light energy to abstract electrons from H(2)O, generating O(2) and a proton gradient subsequently used for ATP formation. It consists of a core antenna complex that captures photons, and an electron transfer chain that converts photonic excitation into a charge separation. The polypeptide is Cytochrome b559 subunit beta (Beta vulgaris (Sugar beet)).